We begin with the raw amino-acid sequence, 483 residues long: Glutamyl-tRNA(Gln) amidotransferase subunit A (483 aa).

Catalysis depends on charge relay system residues K75 and S150. S174 functions as the Acyl-ester intermediate in the catalytic mechanism.

Belongs to the amidase family. GatA subfamily. As to quaternary structure, heterotrimer of A, B and C subunits.

The enzyme catalyses L-glutamyl-tRNA(Gln) + L-glutamine + ATP + H2O = L-glutaminyl-tRNA(Gln) + L-glutamate + ADP + phosphate + H(+). Functionally, allows the formation of correctly charged Gln-tRNA(Gln) through the transamidation of misacylated Glu-tRNA(Gln) in organisms which lack glutaminyl-tRNA synthetase. The reaction takes place in the presence of glutamine and ATP through an activated gamma-phospho-Glu-tRNA(Gln). This is Glutamyl-tRNA(Gln) amidotransferase subunit A from Deinococcus geothermalis (strain DSM 11300 / CIP 105573 / AG-3a).